Consider the following 500-residue polypeptide: Glycerol kinase (500 aa).

Residue T13 coordinates ADP. ATP is bound by residues T13, T14, and S15. Residue T13 participates in sn-glycerol 3-phosphate binding. Residue R17 coordinates ADP. Sn-glycerol 3-phosphate-binding residues include R83, E84, Y135, and D244. Glycerol contacts are provided by R83, E84, Y135, D244, and Q245. Positions 266 and 309 each coordinate ADP. ATP is bound by residues T266, G309, Q313, and G410. G410 and N414 together coordinate ADP.

The protein belongs to the FGGY kinase family.

It carries out the reaction glycerol + ATP = sn-glycerol 3-phosphate + ADP + H(+). It participates in polyol metabolism; glycerol degradation via glycerol kinase pathway; sn-glycerol 3-phosphate from glycerol: step 1/1. Inhibited by fructose 1,6-bisphosphate (FBP). Its function is as follows. Key enzyme in the regulation of glycerol uptake and metabolism. Catalyzes the phosphorylation of glycerol to yield sn-glycerol 3-phosphate. The polypeptide is Glycerol kinase (Burkholderia vietnamiensis (strain G4 / LMG 22486) (Burkholderia cepacia (strain R1808))).